Here is a 169-residue protein sequence, read N- to C-terminus: MLETFTNDTNEIQGRLSAWLIKHRLAHRPLGFDYQGVETLQVRSEDWLSIAVALYAYGFNYLRSQCVYDVAPGGLLASVYHLTKVQSNADQPEEVCIKIFVSRKNPKIPSVFWVWKGADFQERESYDMLGISYESHPRLKRILMPDSWIGWPLRKDYIVPNFYELQDAY.

This sequence belongs to the complex I 30 kDa subunit family. As to quaternary structure, NDH is composed of at least 16 different subunits, 5 of which are encoded in the nucleus.

The protein localises to the plastid. It is found in the chloroplast thylakoid membrane. It carries out the reaction a plastoquinone + NADH + (n+1) H(+)(in) = a plastoquinol + NAD(+) + n H(+)(out). The enzyme catalyses a plastoquinone + NADPH + (n+1) H(+)(in) = a plastoquinol + NADP(+) + n H(+)(out). Its function is as follows. NDH shuttles electrons from NAD(P)H:plastoquinone, via FMN and iron-sulfur (Fe-S) centers, to quinones in the photosynthetic chain and possibly in a chloroplast respiratory chain. The immediate electron acceptor for the enzyme in this species is believed to be plastoquinone. Couples the redox reaction to proton translocation, and thus conserves the redox energy in a proton gradient. This is NAD(P)H-quinone oxidoreductase subunit J, chloroplastic from Anthoceros angustus (Hornwort).